Reading from the N-terminus, the 374-residue chain is Pectate lyase 2 (374 aa).

Residues 1 to 22 form the signal peptide; it reads MKYLLPTAAAGLLLLAAQPAMA. Residues Cys-93 and Cys-176 are joined by a disulfide bond. Ca(2+) contacts are provided by Asp-150, Asp-152, Glu-187, and Asp-191. Residue Arg-239 is part of the active site. A disulfide bridge links Cys-350 with Cys-373.

Belongs to the polysaccharide lyase 1 family. PLADES subfamily. Requires Ca(2+) as cofactor.

The protein localises to the secreted. It carries out the reaction Eliminative cleavage of (1-&gt;4)-alpha-D-galacturonan to give oligosaccharides with 4-deoxy-alpha-D-galact-4-enuronosyl groups at their non-reducing ends.. It functions in the pathway glycan metabolism; pectin degradation; 2-dehydro-3-deoxy-D-gluconate from pectin: step 2/5. Functionally, involved in maceration and soft-rotting of plant tissue. This Pectobacterium carotovorum (Erwinia carotovora) protein is Pectate lyase 2 (pel2).